Reading from the N-terminus, the 134-residue chain is Interleukin-5 (134 aa).

The N-terminal stretch at 1-19 (MRMLLHLSLLALGAAYVYA) is a signal peptide. O-linked (GalNAc...) threonine glycosylation occurs at threonine 22. N-linked (GlcNAc...) asparagine glycosylation occurs at asparagine 47.

This sequence belongs to the IL-5 family. In terms of assembly, homodimer; disulfide-linked. Interacts with IL5RA. Interacts with CSF2RB. In terms of tissue distribution, present in peripheral blood mononuclear cells.

Its subcellular location is the secreted. In terms of biological role, homodimeric cytokine expressed predominantly by T-lymphocytes and NK cells that plays an important role in the survival, differentiation, and chemotaxis of eosinophils. Also acts on activated and resting B-cells to induce immunoglobulin production, growth, and differentiation. Mechanistically, exerts its biological effects through a receptor composed of IL5RA subunit and the cytokine receptor common subunit beta/CSF2RB. Binding to the receptor leads to activation of various kinases including LYN, SYK and JAK2 and thereby propagates signals through the RAS-MAPK and JAK-STAT5 pathways respectively. The sequence is that of Interleukin-5 (IL5) from Homo sapiens (Human).